Consider the following 35-residue polypeptide: Bacteriocin SRCAM 1580 (35 aa).

Belongs to the bacteriocin class IIA/YGNGV family.

The protein resides in the secreted. Bacteriocin with antibacterial activity against C.jejuni. The chain is Bacteriocin SRCAM 1580 from Niallia circulans (Bacillus circulans).